The sequence spans 389 residues: S-adenosylmethionine synthase (389 aa).

ATP is bound at residue His15. Asp17 is a Mg(2+) binding site. Residue Glu43 coordinates K(+). L-methionine-binding residues include Glu56 and Gln99. Positions 99–109 are flexible loop; the sequence is QSPDIAQGVNE. ATP is bound by residues 166–168, 234–235, Asp243, 249–250, Ala266, and Lys270; these read DAK, RF, and RK. Asp243 contacts L-methionine. Lys274 contributes to the L-methionine binding site.

This sequence belongs to the AdoMet synthase family. As to quaternary structure, homotetramer; dimer of dimers. Mg(2+) serves as cofactor. K(+) is required as a cofactor.

The protein resides in the cytoplasm. The enzyme catalyses L-methionine + ATP + H2O = S-adenosyl-L-methionine + phosphate + diphosphate. The protein operates within amino-acid biosynthesis; S-adenosyl-L-methionine biosynthesis; S-adenosyl-L-methionine from L-methionine: step 1/1. Its function is as follows. Catalyzes the formation of S-adenosylmethionine (AdoMet) from methionine and ATP. The overall synthetic reaction is composed of two sequential steps, AdoMet formation and the subsequent tripolyphosphate hydrolysis which occurs prior to release of AdoMet from the enzyme. This is S-adenosylmethionine synthase from Neisseria gonorrhoeae (strain ATCC 700825 / FA 1090).